The following is a 574-amino-acid chain: Isocitrate dehydrogenase kinase/phosphatase (574 aa).

Residues 311 to 317 (APGIRGM) and Lys-332 each bind ATP. Asp-367 is an active-site residue.

The protein belongs to the AceK family.

Its subcellular location is the cytoplasm. It catalyses the reaction L-seryl-[isocitrate dehydrogenase] + ATP = O-phospho-L-seryl-[isocitrate dehydrogenase] + ADP + H(+). In terms of biological role, bifunctional enzyme which can phosphorylate or dephosphorylate isocitrate dehydrogenase (IDH) on a specific serine residue. This is a regulatory mechanism which enables bacteria to bypass the Krebs cycle via the glyoxylate shunt in response to the source of carbon. When bacteria are grown on glucose, IDH is fully active and unphosphorylated, but when grown on acetate or ethanol, the activity of IDH declines drastically concomitant with its phosphorylation. In Shigella boydii serotype 4 (strain Sb227), this protein is Isocitrate dehydrogenase kinase/phosphatase.